The chain runs to 314 residues: MLKDLFGKKRKFATVPSETLARVPASTDISKEAGTKEKEVPEGLMNKCPHCGTIHYSKDLEKNLRVCKGCQFHYSMSAPERLQALLDDGVLREEFDANLITANPLGFPGYLEKLEQDMANTNLNEAIITGEGFLGGNRIVIGVMDSRFRMASMGSVVGEKITRAIEQAIERRLPFILFSASGGARMQEGVLSLMQMAKTSAALSRLDRERLLFVSVMTNPTYGGVSASFSSLGDYNIAEPGAMIGFAGRRVIEQTIRQELPKDFQTAEFLLKNGQLDMVVHRKDMRNTLSKLVEMHTSREGVETWQASSPLKSH.

In terms of domain architecture, CoA carboxyltransferase N-terminal spans 44–311; the sequence is LMNKCPHCGT…VETWQASSPL (268 aa). Residues Cys48, Cys51, Cys67, and Cys70 each contribute to the Zn(2+) site. A C4-type zinc finger spans residues 48–70; sequence CPHCGTIHYSKDLEKNLRVCKGC.

Belongs to the AccD/PCCB family. As to quaternary structure, acetyl-CoA carboxylase is a heterohexamer composed of biotin carboxyl carrier protein (AccB), biotin carboxylase (AccC) and two subunits each of ACCase subunit alpha (AccA) and ACCase subunit beta (AccD). Zn(2+) serves as cofactor.

The protein resides in the cytoplasm. It catalyses the reaction N(6)-carboxybiotinyl-L-lysyl-[protein] + acetyl-CoA = N(6)-biotinyl-L-lysyl-[protein] + malonyl-CoA. The protein operates within lipid metabolism; malonyl-CoA biosynthesis; malonyl-CoA from acetyl-CoA: step 1/1. Functionally, component of the acetyl coenzyme A carboxylase (ACC) complex. Biotin carboxylase (BC) catalyzes the carboxylation of biotin on its carrier protein (BCCP) and then the CO(2) group is transferred by the transcarboxylase to acetyl-CoA to form malonyl-CoA. The protein is Acetyl-coenzyme A carboxylase carboxyl transferase subunit beta of Brevibacillus brevis (strain 47 / JCM 6285 / NBRC 100599).